The primary structure comprises 157 residues: 2-C-methyl-D-erythritol 2,4-cyclodiphosphate synthase (157 aa).

Residues Asp8 and His10 each contribute to the a divalent metal cation site. 4-CDP-2-C-methyl-D-erythritol 2-phosphate is bound by residues 8–10 (DVH) and 34–35 (HS). An a divalent metal cation-binding site is contributed by His42. Residues 56-58 (DIG), 132-135 (TTNE), and Arg142 each bind 4-CDP-2-C-methyl-D-erythritol 2-phosphate.

Belongs to the IspF family. Homotrimer. The cofactor is a divalent metal cation.

It carries out the reaction 4-CDP-2-C-methyl-D-erythritol 2-phosphate = 2-C-methyl-D-erythritol 2,4-cyclic diphosphate + CMP. The protein operates within isoprenoid biosynthesis; isopentenyl diphosphate biosynthesis via DXP pathway; isopentenyl diphosphate from 1-deoxy-D-xylulose 5-phosphate: step 4/6. Functionally, involved in the biosynthesis of isopentenyl diphosphate (IPP) and dimethylallyl diphosphate (DMAPP), two major building blocks of isoprenoid compounds. Catalyzes the conversion of 4-diphosphocytidyl-2-C-methyl-D-erythritol 2-phosphate (CDP-ME2P) to 2-C-methyl-D-erythritol 2,4-cyclodiphosphate (ME-CPP) with a corresponding release of cytidine 5-monophosphate (CMP). This chain is 2-C-methyl-D-erythritol 2,4-cyclodiphosphate synthase, found in Chlorobaculum parvum (strain DSM 263 / NCIMB 8327) (Chlorobium vibrioforme subsp. thiosulfatophilum).